The sequence spans 521 residues: GMP synthase [glutamine-hydrolyzing] (521 aa).

In terms of domain architecture, Glutamine amidotransferase type-1 spans 5 to 197; it reads KILILDFGSQ…VLDICGAQPG (193 aa). The Nucleophile role is filled by Cys-81. Residues His-171 and Glu-173 contribute to the active site. The region spanning 198 to 390 is the GMPS ATP-PPase domain; it reads WTMPNYIEEA…LGLPREMVYR (193 aa). 225-231 provides a ligand contact to ATP; that stretch reads SGGVDSS.

Homodimer.

The enzyme catalyses XMP + L-glutamine + ATP + H2O = GMP + L-glutamate + AMP + diphosphate + 2 H(+). It participates in purine metabolism; GMP biosynthesis; GMP from XMP (L-Gln route): step 1/1. Functionally, catalyzes the synthesis of GMP from XMP. The chain is GMP synthase [glutamine-hydrolyzing] (guaA) from Neisseria meningitidis serogroup A / serotype 4A (strain DSM 15465 / Z2491).